The chain runs to 744 residues: NAD(P)H-quinone oxidoreductase subunit 5, chloroplastic (744 aa).

Transmembrane regions (helical) follow at residues W9–F29, W40–I60, I89–I109, F125–I145, V147–T167, G185–F205, N219–A239, T258–A278, L280–I300, L327–I347, A354–S374, N396–S416, W425–Y445, L552–F572, F612–F632, and I724–I744.

It belongs to the complex I subunit 5 family. As to quaternary structure, NDH is composed of at least 16 different subunits, 5 of which are encoded in the nucleus.

It localises to the plastid. It is found in the chloroplast thylakoid membrane. It catalyses the reaction a plastoquinone + NADH + (n+1) H(+)(in) = a plastoquinol + NAD(+) + n H(+)(out). It carries out the reaction a plastoquinone + NADPH + (n+1) H(+)(in) = a plastoquinol + NADP(+) + n H(+)(out). NDH shuttles electrons from NAD(P)H:plastoquinone, via FMN and iron-sulfur (Fe-S) centers, to quinones in the photosynthetic chain and possibly in a chloroplast respiratory chain. The immediate electron acceptor for the enzyme in this species is believed to be plastoquinone. Couples the redox reaction to proton translocation, and thus conserves the redox energy in a proton gradient. The chain is NAD(P)H-quinone oxidoreductase subunit 5, chloroplastic (ndhF) from Cicer arietinum (Chickpea).